The following is a 313-amino-acid chain: tRNA pseudouridine synthase B (313 aa).

His44 contributes to the substrate binding site. The active-site Nucleophile is Asp49. Residues Tyr77, Tyr180, and Leu201 each coordinate substrate.

Belongs to the pseudouridine synthase TruB family. Type 1 subfamily.

The catalysed reaction is uridine(55) in tRNA = pseudouridine(55) in tRNA. Functionally, responsible for synthesis of pseudouridine from uracil-55 in the psi GC loop of transfer RNAs. The sequence is that of tRNA pseudouridine synthase B from Hamiltonella defensa subsp. Acyrthosiphon pisum (strain 5AT).